We begin with the raw amino-acid sequence, 511 residues long: Glutamate/gamma-aminobutyrate antiporter (511 aa).

Topologically, residues 1 to 14 (MATLVQTGKAKQLT) are cytoplasmic. The helical transmembrane segment at 15-35 (LLGFFAITASMVMAVYEYPTF) threads the bilayer. Topologically, residues 36–41 (ATSGFS) are periplasmic. The helical transmembrane segment at 42–62 (LVFFLLLGGILWFIPVGLCAA) threads the bilayer. The Cytoplasmic segment spans residues 63–93 (EMATVDGWEEGGVFAWVSNTLGPRWGFAAIS). A helical transmembrane segment spans residues 94-114 (FGYLQIAIGFIPMLYFVLGAL). At 115–127 (SYILKWPALNEDP) the chain is on the periplasmic side. A helical membrane pass occupies residues 128 to 148 (ITKTIAALIILWALALTQFGG). The Cytoplasmic portion of the chain corresponds to 149–157 (TKYTARIAK). Residues 158-178 (VGFFAGILLPAFILIALAAIY) form a helical membrane-spanning segment. At 179 to 200 (LHSGAPVAIEMDSKTFFPDFSK) the chain is on the periplasmic side. The chain crosses the membrane as a helical span at residues 201 to 221 (VGTLVVFVAFILSYMGVEASA). Over 222–239 (THVNEMSNPGRDYPLAML) the chain is Cytoplasmic. Residues 240 to 260 (LLMVAAICLSSVGGLSIAMVI) traverse the membrane as a helical segment. Over 261–291 (PGNEINLSAGVMQTFTVLMSHVAPEIEWTVR) the chain is Periplasmic. Residues 292-312 (VISALLLLGVLAEIASWIVGP) form a helical membrane-spanning segment. Over 313-335 (SRGMYVTAQKNLLPAAFAKMNKN) the chain is Cytoplasmic. The chain crosses the membrane as a helical span at residues 336–356 (GVPVTLVISQLVITSIALIIL). At 357–366 (TNTGGGNNMS) the chain is on the periplasmic side. A helical membrane pass occupies residues 367-387 (FLIALALTVVIYLCAYFMLFI). Residues 388–412 (GYIVLVLKHPDLKRTFNIPGGKGVK) lie on the Cytoplasmic side of the membrane. The chain crosses the membrane as a helical span at residues 413–433 (LVVAIVGLLTSIMAFIVSFLP). Residues 434–445 (PDNIQGDSTDMY) lie on the Periplasmic side of the membrane. The chain crosses the membrane as a helical span at residues 446-466 (VELLVVSFLVVLALPFILYAV). Topologically, residues 467–511 (HDRKGKANTGVTLEPINSQNAPKGHFFLHPRARSPHYIVMNDKKH) are cytoplasmic.

This sequence belongs to the amino acid-polyamine-organocation (APC) superfamily. Glutamate:GABA antiporter (GGA) (TC 2.A.3.7) family.

The protein resides in the cell inner membrane. The enzyme catalyses 4-aminobutanoate(in) + L-glutamate(out) = 4-aminobutanoate(out) + L-glutamate(in). With respect to regulation, shows pH-dependent activity. The glutamate analog L-trans-pyrrolidine-2,4-dicarboxylic acid (L-PDC) blocks the uptake of glutamate by selective inhibition. Functionally, involved in glutaminase-dependent acid resistance. Exchanges extracellular glutamate (Glu) for intracellular gamma-aminobutyric acid (GABA) under acidic conditions. The ability to survive the extremely acidic conditions of the stomach is essential for successful colonization of the host by commensal and pathogenic bacteria. The chain is Glutamate/gamma-aminobutyrate antiporter (gadC) from Escherichia coli O157:H7.